The chain runs to 231 residues: Equistatin (231 aa).

An N-terminal signal peptide occupies residues 1–32 (MALSQNQAKFSKGFVVMIWVLFIACAITSTEA). Thyroglobulin type-1 domains follow at residues 34 to 95 (LTKC…SPDC), 102 to 163 (LTLC…RPTC), and 167 to 231 (LSEC…RPTC). 9 disulfide bridges follow: C37–C56, C67–C74, C76–C95, C105–C124, C135–C142, C144–C163, C170–C191, C202–C209, and C211–C231.

Belongs to the protease inhibitor I31 family.

It localises to the secreted. Potent inhibitor of papain-like cysteine proteinases (Ki=0.18-0.57 nM on papain), as well as of the aspartic proteinase cathepsin D (Ki=0.3-05 nM). This Actinia equina (Beadlet anemone) protein is Equistatin.